A 94-amino-acid polypeptide reads, in one-letter code: Probable FAD-linked sulfhydryl oxidase FPV093 (94 aa).

The ERV/ALR sulfhydryl oxidase domain maps to 1 to 94 (MDPRYWGSSF…IDIKKVKKLI (94 aa)). The cysteines at positions 41 and 44 are disulfide-linked.

This sequence belongs to the poxviruses E10 family. FAD is required as a cofactor.

The catalysed reaction is 2 R'C(R)SH + O2 = R'C(R)S-S(R)CR' + H2O2. Functionally, FAD-dependent sulfhydryl oxidase that catalyzes disulfide bond formation. The polypeptide is Probable FAD-linked sulfhydryl oxidase FPV093 (Fowlpox virus (strain NVSL) (FPV)).